The sequence spans 310 residues: Pirin-like protein At1g50590 (310 aa).

Belongs to the pirin family.

The protein localises to the nucleus. This is Pirin-like protein At1g50590 from Arabidopsis thaliana (Mouse-ear cress).